A 109-amino-acid polypeptide reads, in one-letter code: Nucleoid-associated protein Spea_1509 (109 aa).

The interval 87-109 (NQKEKMAEVTGGMQLPPGMKMPF) is disordered.

It belongs to the YbaB/EbfC family. As to quaternary structure, homodimer.

It is found in the cytoplasm. It localises to the nucleoid. Binds to DNA and alters its conformation. May be involved in regulation of gene expression, nucleoid organization and DNA protection. This chain is Nucleoid-associated protein Spea_1509, found in Shewanella pealeana (strain ATCC 700345 / ANG-SQ1).